The following is a 174-amino-acid chain: MERFRDGAQDAFEDLFARHAPRVQGFLARMVRNGALAEDLLQATFLSVIRSRGRYEPGTRFIPWLMTIAANAARDALRHQRHVDAYASREDTATPASAAPDDSDPSLRRHLLDALQQLHPDHREAVVLSKVEGWSFEEIGALRGISPGAARLRAHRGYEKLRELLGELELEVAR.

Residues 39-52 carry the Polymerase core binding motif; the sequence is DLLQATFLSVIRSR. The segment at 86 to 106 is disordered; the sequence is YASREDTATPASAAPDDSDPS. Residues 136–155 constitute a DNA-binding region (H-T-H motif); that stretch reads FEEIGALRGISPGAARLRAH.

This sequence belongs to the sigma-70 factor family. ECF subfamily.

Sigma factors are initiation factors that promote the attachment of RNA polymerase to specific initiation sites and are then released. This sigma factor regulates genes for the light induced biosynthesis of carotenoids. The sequence is that of RNA polymerase sigma factor CarQ (carQ) from Myxococcus xanthus.